Here is a 140-residue protein sequence, read N- to C-terminus: Nucleoside diphosphate kinase (140 aa).

The ATP site is built by Lys-11, Phe-59, Arg-87, Thr-93, Arg-104, and Asn-114. Catalysis depends on His-117, which acts as the Pros-phosphohistidine intermediate.

Belongs to the NDK family. As to quaternary structure, homotetramer. Mg(2+) serves as cofactor.

Its subcellular location is the cytoplasm. The catalysed reaction is a 2'-deoxyribonucleoside 5'-diphosphate + ATP = a 2'-deoxyribonucleoside 5'-triphosphate + ADP. The enzyme catalyses a ribonucleoside 5'-diphosphate + ATP = a ribonucleoside 5'-triphosphate + ADP. Its function is as follows. Major role in the synthesis of nucleoside triphosphates other than ATP. The ATP gamma phosphate is transferred to the NDP beta phosphate via a ping-pong mechanism, using a phosphorylated active-site intermediate. This chain is Nucleoside diphosphate kinase, found in Hyphomonas neptunium (strain ATCC 15444).